A 113-amino-acid chain; its full sequence is MSSIFINKGVEMMESEKSGGMDRYVTFERIDCFKNAHEVVSNALRVLEANPEMKNPFWEKFCSKIPDSFYSYTPQEDLLYLVCANVFYLEELFDEAEDEEGQAIMSRCEFECC.

It belongs to the CowN family.

Functionally, is required to sustain N(2)-dependent growth in the presence of low levels of carbon monoxide (CO). Probably acts by protecting the N(2) fixation ability of the nitrogenase complex, which is inactivated in the presence of CO. The protein is N(2)-fixation sustaining protein CowN of Wolinella succinogenes (strain ATCC 29543 / DSM 1740 / CCUG 13145 / JCM 31913 / LMG 7466 / NCTC 11488 / FDC 602W) (Vibrio succinogenes).